Here is a 351-residue protein sequence, read N- to C-terminus: 3-dehydroquinate synthase (351 aa).

NAD(+) is bound by residues 60-65 (DGEEYK), 94-98 (GVISD), 118-119 (TT), Lys131, Lys140, and 158-161 (FLKT). Residues Glu173, His239, and His256 each coordinate Zn(2+).

This sequence belongs to the sugar phosphate cyclases superfamily. Dehydroquinate synthase family. Co(2+) serves as cofactor. The cofactor is Zn(2+). NAD(+) is required as a cofactor.

The protein localises to the cytoplasm. It catalyses the reaction 7-phospho-2-dehydro-3-deoxy-D-arabino-heptonate = 3-dehydroquinate + phosphate. The protein operates within metabolic intermediate biosynthesis; chorismate biosynthesis; chorismate from D-erythrose 4-phosphate and phosphoenolpyruvate: step 2/7. Catalyzes the conversion of 3-deoxy-D-arabino-heptulosonate 7-phosphate (DAHP) to dehydroquinate (DHQ). This is 3-dehydroquinate synthase from Campylobacter jejuni subsp. doylei (strain ATCC BAA-1458 / RM4099 / 269.97).